We begin with the raw amino-acid sequence, 165 residues long: Probable chemoreceptor glutamine deamidase CheD (165 aa).

This sequence belongs to the CheD family.

It carries out the reaction L-glutaminyl-[protein] + H2O = L-glutamyl-[protein] + NH4(+). Probably deamidates glutamine residues to glutamate on methyl-accepting chemotaxis receptors (MCPs), playing an important role in chemotaxis. This chain is Probable chemoreceptor glutamine deamidase CheD, found in Geobacillus kaustophilus (strain HTA426).